Here is a 60-residue protein sequence, read N- to C-terminus: Large ribosomal subunit protein bL32 (60 aa).

A compositionally biased stretch (basic residues) spans M1–R16. A disordered region spans residues M1–A60. Over residues R17–L44 the composition is skewed to basic and acidic residues.

The protein belongs to the bacterial ribosomal protein bL32 family.

In Rhodopseudomonas palustris (strain BisB5), this protein is Large ribosomal subunit protein bL32.